Here is a 151-residue protein sequence, read N- to C-terminus: Ribosome maturation factor RimP (151 aa).

It belongs to the RimP family.

The protein resides in the cytoplasm. Its function is as follows. Required for maturation of 30S ribosomal subunits. The sequence is that of Ribosome maturation factor RimP from Shewanella amazonensis (strain ATCC BAA-1098 / SB2B).